A 726-amino-acid polypeptide reads, in one-letter code: Catalase-peroxidase (726 aa).

The disordered stretch occupies residues Met-1–Ser-33. The tryptophyl-tyrosyl-methioninium (Trp-Tyr) (with M-252) cross-link spans Trp-105 to Tyr-226. Catalysis depends on His-106, which acts as the Proton acceptor. A cross-link (tryptophyl-tyrosyl-methioninium (Tyr-Met) (with W-105)) is located at residues Tyr-226–Met-252. His-267 contributes to the heme b binding site.

Belongs to the peroxidase family. Peroxidase/catalase subfamily. As to quaternary structure, homodimer or homotetramer. Heme b serves as cofactor. Post-translationally, formation of the three residue Trp-Tyr-Met cross-link is important for the catalase, but not the peroxidase activity of the enzyme.

It carries out the reaction H2O2 + AH2 = A + 2 H2O. It catalyses the reaction 2 H2O2 = O2 + 2 H2O. In terms of biological role, bifunctional enzyme with both catalase and broad-spectrum peroxidase activity. The chain is Catalase-peroxidase from Salmonella heidelberg (strain SL476).